Consider the following 182-residue polypeptide: Histone deacetylase complex subunit SAP30L (182 aa).

Met-1 is subject to N-acetylmethionine. Acidic residues predominate over residues 1–10 (MNGFSTEEDS). The tract at residues 1 to 22 (MNGFSTEEDSREGPPAAPAAAP) is disordered. 2 cysteine pairs are disulfide-bonded: Cys-28–Cys-29 and Cys-37–Cys-73. The segment at 28-76 (CCLIADGERCVRPAGNASFSKRVQKSISQKKLKLDIDKSVRHLYICDFH) adopts an Atypical zinc-finger fold. Residue Lys-48 forms a Glycyl lysine isopeptide (Lys-Gly) (interchain with G-Cter in SUMO2) linkage. The disordered stretch occupies residues 84 to 103 (RNKRKRKASDDGGDSPEHDA). The Nuclear localization signal (NLS) motif lies at 85–90 (NKRKRK). The interval 87–89 (RKR) is important for DNA and phosphoinositide binding. Phosphoserine occurs at positions 92 and 98. Residues Lys-154, Lys-165, and Lys-174 each participate in a glycyl lysine isopeptide (Lys-Gly) (interchain with G-Cter in SUMO2) cross-link.

Belongs to the SAP30 family. As to quaternary structure, interacts with components of the histone deacetylase complex SIN3A, HDAC1 and HDAC2. Binds histones and nucleosomes. Interacts with FEZ1.

Its subcellular location is the nucleus. The protein localises to the nucleolus. In terms of biological role, functions as a transcription repressor, probably via its interaction with histone deacetylase complexes. Involved in the functional recruitment of the class 1 Sin3-histone deacetylase complex (HDAC) to the nucleolus. Binds DNA, apparently without sequence-specificity, and bends bound double-stranded DNA. Binds phosphoinositol phosphates (phosphoinositol 3-phosphate, phosphoinositol 4-phosphate and phosphoinositol 5-phosphate) via the same basic sequence motif that mediates DNA binding and nuclear import. This Mus musculus (Mouse) protein is Histone deacetylase complex subunit SAP30L (Sap30l).